We begin with the raw amino-acid sequence, 274 residues long: 5-deoxy-glucuronate isomerase (274 aa).

The protein belongs to the isomerase IolB family.

The catalysed reaction is 5-deoxy-D-glucuronate = 5-dehydro-2-deoxy-D-gluconate. It functions in the pathway polyol metabolism; myo-inositol degradation into acetyl-CoA; acetyl-CoA from myo-inositol: step 4/7. Involved in the isomerization of 5-deoxy-glucuronate (5DG) to 5-dehydro-2-deoxy-D-gluconate (DKG or 2-deoxy-5-keto-D-gluconate). This chain is 5-deoxy-glucuronate isomerase, found in Geobacillus thermodenitrificans (strain NG80-2).